A 95-amino-acid chain; its full sequence is Exodeoxyribonuclease 7 small subunit (95 aa).

It belongs to the XseB family. In terms of assembly, heterooligomer composed of large and small subunits.

The protein resides in the cytoplasm. It catalyses the reaction Exonucleolytic cleavage in either 5'- to 3'- or 3'- to 5'-direction to yield nucleoside 5'-phosphates.. In terms of biological role, bidirectionally degrades single-stranded DNA into large acid-insoluble oligonucleotides, which are then degraded further into small acid-soluble oligonucleotides. The sequence is that of Exodeoxyribonuclease 7 small subunit from Corynebacterium aurimucosum (strain ATCC 700975 / DSM 44827 / CIP 107346 / CN-1) (Corynebacterium nigricans).